Reading from the N-terminus, the 430-residue chain is Endo-beta-1,4-glucanase celB (430 aa).

The N-terminal stretch at M1–A16 is a signal peptide. N43 and N153 each carry an N-linked (GlcNAc...) asparagine glycan. E216 (nucleophile) is an active-site residue. E221 acts as the Proton donor in catalysis. N395 carries N-linked (GlcNAc...) asparagine glycosylation.

This sequence belongs to the glycosyl hydrolase 7 (cellulase C) family.

It is found in the secreted. The catalysed reaction is Endohydrolysis of (1-&gt;4)-beta-D-glucosidic linkages in cellulose, lichenin and cereal beta-D-glucans.. In terms of biological role, has endoglucanase activity on substrates containing beta-1,4 glycosidic bonds, like in carboxymethylcellulose (CMC), hydroxyethylcellulose (HEC) and beta-glucan. Involved in the degradation of complex natural cellulosic substrates. The sequence is that of Endo-beta-1,4-glucanase celB (celB) from Emericella nidulans (strain FGSC A4 / ATCC 38163 / CBS 112.46 / NRRL 194 / M139) (Aspergillus nidulans).